An 83-amino-acid chain; its full sequence is Small ribosomal subunit protein bS20 (83 aa).

The tract at residues 1–25 (MPNIKSAIKRVNTTHTAEERNISQK) is disordered. Basic and acidic residues predominate over residues 16 to 25 (TAEERNISQK).

Belongs to the bacterial ribosomal protein bS20 family.

Functionally, binds directly to 16S ribosomal RNA. The chain is Small ribosomal subunit protein bS20 from Staphylococcus saprophyticus subsp. saprophyticus (strain ATCC 15305 / DSM 20229 / NCIMB 8711 / NCTC 7292 / S-41).